The chain runs to 424 residues: N-succinylarginine dihydrolase (424 aa).

Substrate is bound by residues 19–28, asparagine 110, and 137–138; these read AGLSRGNVAS and HR. Glutamate 174 is a catalytic residue. Arginine 206 is a substrate binding site. Residue histidine 242 is part of the active site. Residues aspartate 244 and asparagine 351 each coordinate substrate. Cysteine 357 (nucleophile) is an active-site residue.

Belongs to the succinylarginine dihydrolase family. In terms of assembly, homodimer.

It catalyses the reaction N(2)-succinyl-L-arginine + 2 H2O + 2 H(+) = N(2)-succinyl-L-ornithine + 2 NH4(+) + CO2. It participates in amino-acid degradation; L-arginine degradation via AST pathway; L-glutamate and succinate from L-arginine: step 2/5. Its function is as follows. Catalyzes the hydrolysis of N(2)-succinylarginine into N(2)-succinylornithine, ammonia and CO(2). This is N-succinylarginine dihydrolase from Zymomonas mobilis subsp. mobilis (strain ATCC 31821 / ZM4 / CP4).